A 279-amino-acid polypeptide reads, in one-letter code: NAD kinase (279 aa).

The active-site Proton acceptor is the Asp61. NAD(+) contacts are provided by residues 61-62 (DG), 138-139 (ND), Lys149, Lys166, Asp168, and 179-184 (TGYSFS).

It belongs to the NAD kinase family. A divalent metal cation serves as cofactor.

Its subcellular location is the cytoplasm. It catalyses the reaction NAD(+) + ATP = ADP + NADP(+) + H(+). Involved in the regulation of the intracellular balance of NAD and NADP, and is a key enzyme in the biosynthesis of NADP. Catalyzes specifically the phosphorylation on 2'-hydroxyl of the adenosine moiety of NAD to yield NADP. This Borreliella burgdorferi (strain ATCC 35210 / DSM 4680 / CIP 102532 / B31) (Borrelia burgdorferi) protein is NAD kinase.